Here is a 918-residue protein sequence, read N- to C-terminus: Plasma membrane ATPase 1 (918 aa).

Residues Met-1 to Ala-18 show a composition bias toward low complexity. A disordered region spans residues Met-1 to Pro-84. At Met-1–Lys-115 the chain is on the cytoplasmic side. The segment covering Ala-33–Ile-47 has biased composition (acidic residues). At Ser-61 the chain carries Phosphoserine. The helical transmembrane segment at Phe-116–Ala-136 threads the bilayer. The Extracellular portion of the chain corresponds to Gly-137–Asp-140. Residues Trp-141–Val-160 form a helical membrane-spanning segment. Over Gln-161–Asn-291 the chain is Cytoplasmic. Thr-175 is subject to Phosphothreonine. A Glycyl lysine isopeptide (Lys-Gly) (interchain with G-Cter in ubiquitin) cross-link involves residue Lys-252. The helical transmembrane segment at Gly-292 to Phe-313 threads the bilayer. Residues Tyr-314–Tyr-325 are Extracellular-facing. A helical membrane pass occupies residues Thr-326–Ala-347. Topologically, residues Val-348 to Ile-719 are cytoplasmic. The active-site 4-aspartylphosphate intermediate is Asp-378. Lys-555 is covalently cross-linked (Glycyl lysine isopeptide (Lys-Gly) (interchain with G-Cter in ubiquitin)). Mg(2+) is bound by residues Asp-634 and Asp-638. A helical membrane pass occupies residues Asp-720 to Tyr-738. The Extracellular segment spans residues Asp-739–Arg-754. Residues Leu-755 to Leu-774 traverse the membrane as a helical segment. The Cytoplasmic portion of the chain corresponds to Thr-775–Gln-824. The helical transmembrane segment at Leu-825–Trp-845 threads the bilayer. Residues Ser-846–Arg-857 lie on the Extracellular side of the membrane. A helical membrane pass occupies residues Val-858–Tyr-874. Residues Glu-875–Thr-918 lie on the Cytoplasmic side of the membrane. The residue at position 911 (Ser-911) is a Phosphoserine. Residues Thr-912 and Thr-918 each carry the phosphothreonine modification.

Belongs to the cation transport ATPase (P-type) (TC 3.A.3) family. Type IIIA subfamily. Interacts with its cargot receptor EXP1 for its transport within the cell and maturation. Phosphorylated on multiple Ser and Thr residues.

The protein localises to the cell membrane. It catalyses the reaction ATP + H2O + H(+)(in) = ADP + phosphate + 2 H(+)(out). The plasma membrane ATPase of plants and fungi is a hydrogen ion pump. The proton gradient it generates drives the active transport of nutrients by H(+)-symport. The resulting external acidification and/or internal alkinization may mediate growth responses. The sequence is that of Plasma membrane ATPase 1 (PMA1) from Saccharomyces cerevisiae (strain ATCC 204508 / S288c) (Baker's yeast).